A 515-amino-acid polypeptide reads, in one-letter code: Carboxyl-terminal-processing peptidase 2, chloroplastic (515 aa).

One can recognise a PDZ domain in the interval 198 to 286; it reads FKSLRSGTQG…SAVELAIRSG (89 aa). Active-site charge relay system residues include S417 and K442.

The protein belongs to the peptidase S41A family.

It localises to the plastid. The protein localises to the chloroplast thylakoid lumen. The enzyme catalyses The enzyme shows specific recognition of a C-terminal tripeptide, Xaa-Yaa-Zaa, in which Xaa is preferably Ala or Leu, Yaa is preferably Ala or Tyr, and Zaa is preferably Ala, but then cleaves at a variable distance from the C-terminus. A typical cleavage is -Ala-Ala-|-Arg-Ala-Ala-Lys-Glu-Asn-Tyr-Ala-Leu-Ala-Ala.. Its function is as follows. Protease involved in the C-terminal processing of the chloroplastic D1 protein of photosystem II. This proteolytic processing is necessary to allow the light-driven assembly of the tetranuclear manganese cluster, which is responsible for photosynthetic water oxidation. The chain is Carboxyl-terminal-processing peptidase 2, chloroplastic (CTPA2) from Arabidopsis thaliana (Mouse-ear cress).